We begin with the raw amino-acid sequence, 264 residues long: Glutamate racemase (264 aa).

Substrate is bound by residues 10 to 11 and 42 to 43; these read DS and YG. Cysteine 73 acts as the Proton donor/acceptor in catalysis. 74–75 contributes to the substrate binding site; the sequence is NT. Cysteine 183 serves as the catalytic Proton donor/acceptor. A substrate-binding site is contributed by 184–185; the sequence is TH.

The protein belongs to the aspartate/glutamate racemases family.

It catalyses the reaction L-glutamate = D-glutamate. Its pathway is cell wall biogenesis; peptidoglycan biosynthesis. In terms of biological role, provides the (R)-glutamate required for cell wall biosynthesis. In Streptococcus agalactiae serotype Ia (strain ATCC 27591 / A909 / CDC SS700), this protein is Glutamate racemase.